Consider the following 300-residue polypeptide: Free fatty acid receptor 1 (300 aa).

Residues Met-1–Ser-8 are Extracellular-facing. Residues Phe-9–Arg-31 form a helical membrane-spanning segment. Topologically, residues Ala-32–Ser-41 are cytoplasmic. Residues Leu-42–Val-64 traverse the membrane as a helical segment. The Extracellular segment spans residues Glu-65–Cys-79. A disulfide bridge connects residues Cys-79 and Cys-170. Residues Pro-80–Ser-101 traverse the membrane as a helical segment. The Cytoplasmic portion of the chain corresponds to Ala-102–Cys-121. The chain crosses the membrane as a helical span at residues Tyr-122–Phe-142. At Val-143–Ser-178 the chain is on the extracellular side. Asn-155 carries N-linked (GlcNAc...) asparagine glycosylation. A helical membrane pass occupies residues Ala-179–Phe-200. At Cys-201–Ala-223 the chain is on the cytoplasmic side. A helical membrane pass occupies residues Trp-224–Phe-248. Over Leu-249–Ser-256 the chain is Extracellular. The helical transmembrane segment at Trp-257–Leu-279 threads the bilayer. Residues Gly-280–Lys-300 are Cytoplasmic-facing.

The protein belongs to the G-protein coupled receptor 1 family.

It is found in the cell membrane. In terms of biological role, G-protein coupled receptor for medium and long chain saturated and unsaturated fatty acids that plays an important role in glucose homeostasis. Fatty acid binding increases glucose-stimulated insulin secretion, and may also enhance the secretion of glucagon-like peptide 1 (GLP-1). May also play a role in bone homeostasis; receptor signaling activates pathways that inhibit osteoclast differentiation. Ligand binding leads to a conformation change that triggers signaling via G-proteins that activate phospholipase C, leading to an increase of the intracellular calcium concentration. Seems to act through a G(q) and G(i)-mediated pathway. Mediates the anti-inflammatory effects of omega-3 polyunsaturated fatty acids (PUFAs) via inhibition of NLRP3 inflammasome activation. The chain is Free fatty acid receptor 1 (FFAR1) from Macaca fascicularis (Crab-eating macaque).